We begin with the raw amino-acid sequence, 397 residues long: Succinate--CoA ligase [ADP-forming] subunit beta (397 aa).

Residues 9 to 254 form the ATP-grasp domain; that stretch reads KALLKGYGAP…ETEEDAKEIE (246 aa). Residues Lys46, 53 to 55, Glu109, Ala112, and Glu117 each bind ATP; that span reads GRG. Mg(2+) is bound by residues Asn209 and Asp223. Residues Asn274 and 331–333 each bind substrate; that span reads GIM.

It belongs to the succinate/malate CoA ligase beta subunit family. In terms of assembly, heterotetramer of two alpha and two beta subunits. Requires Mg(2+) as cofactor.

The enzyme catalyses succinate + ATP + CoA = succinyl-CoA + ADP + phosphate. It carries out the reaction GTP + succinate + CoA = succinyl-CoA + GDP + phosphate. It functions in the pathway carbohydrate metabolism; tricarboxylic acid cycle; succinate from succinyl-CoA (ligase route): step 1/1. Succinyl-CoA synthetase functions in the citric acid cycle (TCA), coupling the hydrolysis of succinyl-CoA to the synthesis of either ATP or GTP and thus represents the only step of substrate-level phosphorylation in the TCA. The beta subunit provides nucleotide specificity of the enzyme and binds the substrate succinate, while the binding sites for coenzyme A and phosphate are found in the alpha subunit. The protein is Succinate--CoA ligase [ADP-forming] subunit beta of Rhizobium etli (strain CIAT 652).